The chain runs to 385 residues: UPF0284 protein A9601_04941 (385 aa).

Belongs to the UPF0284 family.

This is UPF0284 protein A9601_04941 from Prochlorococcus marinus (strain AS9601).